The chain runs to 460 residues: Light-independent protochlorophyllide reductase subunit N (460 aa).

Positions 22, 47, and 107 each coordinate [4Fe-4S] cluster.

This sequence belongs to the BchN/ChlN family. In terms of assembly, protochlorophyllide reductase is composed of three subunits; ChlL, ChlN and ChlB. Forms a heterotetramer of two ChlB and two ChlN subunits. Requires [4Fe-4S] cluster as cofactor.

It catalyses the reaction chlorophyllide a + oxidized 2[4Fe-4S]-[ferredoxin] + 2 ADP + 2 phosphate = protochlorophyllide a + reduced 2[4Fe-4S]-[ferredoxin] + 2 ATP + 2 H2O. Its pathway is porphyrin-containing compound metabolism; chlorophyll biosynthesis (light-independent). Functionally, component of the dark-operative protochlorophyllide reductase (DPOR) that uses Mg-ATP and reduced ferredoxin to reduce ring D of protochlorophyllide (Pchlide) to form chlorophyllide a (Chlide). This reaction is light-independent. The NB-protein (ChlN-ChlB) is the catalytic component of the complex. In Thermosynechococcus vestitus (strain NIES-2133 / IAM M-273 / BP-1), this protein is Light-independent protochlorophyllide reductase subunit N.